The sequence spans 293 residues: Pyridoxal 5'-phosphate synthase subunit PdxS (293 aa).

Position 23 (aspartate 23) interacts with D-ribose 5-phosphate. Lysine 80 (schiff-base intermediate with D-ribose 5-phosphate) is an active-site residue. A D-ribose 5-phosphate-binding site is contributed by glycine 152. Arginine 164 contacts D-glyceraldehyde 3-phosphate. D-ribose 5-phosphate contacts are provided by residues glycine 213 and 234–235 (GS).

The protein belongs to the PdxS/SNZ family. As to quaternary structure, in the presence of PdxT, forms a dodecamer of heterodimers.

The catalysed reaction is aldehydo-D-ribose 5-phosphate + D-glyceraldehyde 3-phosphate + L-glutamine = pyridoxal 5'-phosphate + L-glutamate + phosphate + 3 H2O + H(+). It functions in the pathway cofactor biosynthesis; pyridoxal 5'-phosphate biosynthesis. In terms of biological role, catalyzes the formation of pyridoxal 5'-phosphate from ribose 5-phosphate (RBP), glyceraldehyde 3-phosphate (G3P) and ammonia. The ammonia is provided by the PdxT subunit. Can also use ribulose 5-phosphate and dihydroxyacetone phosphate as substrates, resulting from enzyme-catalyzed isomerization of RBP and G3P, respectively. In Thermus thermophilus (strain ATCC 27634 / DSM 579 / HB8), this protein is Pyridoxal 5'-phosphate synthase subunit PdxS.